Reading from the N-terminus, the 239-residue chain is tRNA (guanine-N(1)-)-methyltransferase (239 aa).

Residues glycine 108 and 127 to 132 (LGDYVL) each bind S-adenosyl-L-methionine.

This sequence belongs to the RNA methyltransferase TrmD family. As to quaternary structure, homodimer.

The protein resides in the cytoplasm. It catalyses the reaction guanosine(37) in tRNA + S-adenosyl-L-methionine = N(1)-methylguanosine(37) in tRNA + S-adenosyl-L-homocysteine + H(+). Functionally, specifically methylates guanosine-37 in various tRNAs. The polypeptide is tRNA (guanine-N(1)-)-methyltransferase (Streptococcus pneumoniae (strain P1031)).